The primary structure comprises 73 residues: Large ribosomal subunit protein bL31 (73 aa).

Belongs to the bacterial ribosomal protein bL31 family. Type A subfamily. Part of the 50S ribosomal subunit.

In terms of biological role, binds the 23S rRNA. In Ruegeria pomeroyi (strain ATCC 700808 / DSM 15171 / DSS-3) (Silicibacter pomeroyi), this protein is Large ribosomal subunit protein bL31 (rpmE).